The following is a 357-amino-acid chain: Membrane-bound lytic murein transglycosylase C (357 aa).

Positions 1 to 15 (MKKYLLLALLPFLYA) are cleaved as a signal peptide. The N-palmitoyl cysteine moiety is linked to residue Cys16. Cys16 carries the S-diacylglycerol cysteine lipid modification.

The protein belongs to the transglycosylase Slt family.

Its subcellular location is the cell outer membrane. The catalysed reaction is Exolytic cleavage of the (1-&gt;4)-beta-glycosidic linkage between N-acetylmuramic acid (MurNAc) and N-acetylglucosamine (GlcNAc) residues in peptidoglycan, from either the reducing or the non-reducing ends of the peptidoglycan chains, with concomitant formation of a 1,6-anhydrobond in the MurNAc residue.. Its function is as follows. Murein-degrading enzyme. May play a role in recycling of muropeptides during cell elongation and/or cell division. This is Membrane-bound lytic murein transglycosylase C from Haemophilus influenzae (strain ATCC 51907 / DSM 11121 / KW20 / Rd).